The primary structure comprises 949 residues: Bifunctional uridylyltransferase/uridylyl-removing enzyme (949 aa).

The tract at residues 1–377 (MARHETSFPE…RFRNRVRKIP (377 aa)) is uridylyltransferase. Positions 378 to 733 (GTLDFVDDGG…VRTHDFHAIT (356 aa)) are uridylyl-removing. One can recognise an HD domain in the interval 494–610 (VDEHLLRAVD…VDFAERVQSL (117 aa)). ACT domains lie at 734–815 (EITV…DVIA) and 845–926 (VIEV…ERMP). The tract at residues 925–949 (MPSGIIAPTPVPRASHGSKATKAET) is disordered.

The protein belongs to the GlnD family. Mg(2+) serves as cofactor.

It catalyses the reaction [protein-PII]-L-tyrosine + UTP = [protein-PII]-uridylyl-L-tyrosine + diphosphate. The enzyme catalyses [protein-PII]-uridylyl-L-tyrosine + H2O = [protein-PII]-L-tyrosine + UMP + H(+). With respect to regulation, uridylyltransferase (UTase) activity is inhibited by glutamine, while glutamine activates uridylyl-removing (UR) activity. Modifies, by uridylylation and deuridylylation, the PII regulatory proteins (GlnB and homologs), in response to the nitrogen status of the cell that GlnD senses through the glutamine level. Under low glutamine levels, catalyzes the conversion of the PII proteins and UTP to PII-UMP and PPi, while under higher glutamine levels, GlnD hydrolyzes PII-UMP to PII and UMP (deuridylylation). Thus, controls uridylylation state and activity of the PII proteins, and plays an important role in the regulation of nitrogen fixation and metabolism. The polypeptide is Bifunctional uridylyltransferase/uridylyl-removing enzyme (Sinorhizobium medicae (strain WSM419) (Ensifer medicae)).